We begin with the raw amino-acid sequence, 84 residues long: Apovitellenin-1 (84 aa).

The protein belongs to the apovitellenin family. In terms of assembly, monomer.

Protein component of the very low density lipoprotein (VLDL) of egg-laying females. Potent lipoprotein lipase inhibitor, preventing the loss of triglycerides from VLDL on their way from the liver to the growing oocytes. This Dromaius novaehollandiae (Emu) protein is Apovitellenin-1.